We begin with the raw amino-acid sequence, 424 residues long: Dihydroorotase (424 aa).

Zn(2+)-binding residues include H61 and H63. Residues 63-65 (HLR) and N95 contribute to the substrate site. Zn(2+) is bound by residues D153, H180, and H233. N279 is a substrate binding site. Residue D306 participates in Zn(2+) binding. D306 is a catalytic residue. Residue H310 coordinates substrate.

The protein belongs to the metallo-dependent hydrolases superfamily. DHOase family. Class I DHOase subfamily. Zn(2+) serves as cofactor.

It catalyses the reaction (S)-dihydroorotate + H2O = N-carbamoyl-L-aspartate + H(+). It functions in the pathway pyrimidine metabolism; UMP biosynthesis via de novo pathway; (S)-dihydroorotate from bicarbonate: step 3/3. In terms of biological role, catalyzes the reversible cyclization of carbamoyl aspartate to dihydroorotate. This is Dihydroorotase from Geobacter metallireducens (strain ATCC 53774 / DSM 7210 / GS-15).